A 472-amino-acid chain; its full sequence is MRTWKKGTAVASTSTLDNVINLCKRRGFVFPCGEIYGGTRAAWDYGPFGVELKENIKRQWWRAMVTRRDDVVGLDSSVILPREVWVASGHVGVFNDPLTECLSCHKRMRADHLQEGHAAKHGIADPDSISLEEVNCPNCGNKGQWTEPRDFNMMLKTYLGPVEDKSGLHYLRPETAQGIFVNFQNVLTSARKKPPFGIAQTGKSFRNEITPGNFIFRTREFEQMEMEFFVEPGTDEEWHQYWIDVRTAWYTDLGINPDNLRHYEHPKEKLSHYSKRTVDVEYKFGFSGSDWGELEGIANRTDFDLGNHSRHSGKDLSYYDQANNKRYLPYVIEPAAGLTRSLMAFMVDAYTEDEAPNAKGGVDKRTVLKLDPRLSPVKAAVLPLSRNSDLSPKARDLAARLREHWNVDFDDAQAIGKRYRRQDEIGTPFCITVDFDSLEDDAVTIRERDTMAQQRVSIDKVEEYLGGKLLGC.

Residues Arg-109 and Glu-174 each contribute to the substrate site. Residues 206–208, 216–221, 293–294, and 337–340 contribute to the ATP site; these read RNE, FRTREF, EL, and GLTR. Substrate is bound at residue 221–225; the sequence is FEQME. Position 333–337 (333–337) interacts with substrate; that stretch reads EPAAG.

It belongs to the class-II aminoacyl-tRNA synthetase family. Homodimer.

The protein resides in the cytoplasm. The catalysed reaction is tRNA(Gly) + glycine + ATP = glycyl-tRNA(Gly) + AMP + diphosphate. Catalyzes the attachment of glycine to tRNA(Gly). This Cutibacterium acnes (strain DSM 16379 / KPA171202) (Propionibacterium acnes) protein is Glycine--tRNA ligase.